Here is a 287-residue protein sequence, read N- to C-terminus: MTFSQMILNLQNYWQEQGCAIMQPYDMPAGAGTFHPATFLRSLGKKPWAAAYVAPSRRPTDGRYGENPNRLGAYYQFQVLIKPSPDNIQELYLKSLENLGFDLKSHDIRFVEDNWESPSLGAWGLGWEVWLDGMEVTQFTYFQQVGGIAVDLVSAEITYGLERIAMYLQNVDNVYDIVWSEFNGEKIKYADVHKQSEYEFSKYNFEISDVKILNEQFENSYKECKNILEQGLALPAYDYCMLAAHTFNLLDARGSISVAQRQDYMLKIRELSKNCAEIYKKNLNEAE.

This sequence belongs to the class-II aminoacyl-tRNA synthetase family. Tetramer of two alpha and two beta subunits.

The protein localises to the cytoplasm. It carries out the reaction tRNA(Gly) + glycine + ATP = glycyl-tRNA(Gly) + AMP + diphosphate. The sequence is that of Glycine--tRNA ligase alpha subunit from Campylobacter jejuni (strain RM1221).